Here is a 2233-residue protein sequence, read N- to C-terminus: Acetyl-CoA carboxylase (2233 aa).

N-acetylserine is present on Ser-2. Ser-2 carries the post-translational modification Phosphoserine. The region spanning 58–567 (VISKILIANN…TTGWLDDLIT (510 aa)) is the Biotin carboxylation domain. The ATP-grasp domain occupies 216-408 (KTGLVSVDDD…LPAAQLQIAM (193 aa)). 256-261 (GGGGKG) contributes to the ATP binding site. Residues Glu-365, Glu-379, and Asn-381 each coordinate Mn(2+). Arg-383 is an active-site residue. A Biotinyl-binding domain is found at 694–768 (LEVENDPTQL…VAGDIMAIMT (75 aa)). Residue Lys-735 is modified to N6-biotinyllysine. Phosphoserine is present on residues Ser-790, Ser-1148, Ser-1157, and Ser-1162. Residues 1486 to 1822 (PYPVKEWLQP…KRNMPVPILE (337 aa)) form the CoA carboxyltransferase N-terminal domain. The interval 1486–2141 (PYPVKEWLQP…EEYLIKRLSH (656 aa)) is carboxyltransferase. Acetyl-CoA is bound at residue 1627-1629 (ARI). A CoA-binding site is contributed by Arg-1731. The 316-residue stretch at 1826 to 2141 (TWDRPVDFTP…EEYLIKRLSH (316 aa)) folds into the CoA carboxyltransferase C-terminal domain. Gly-1998 is a binding site for acetyl-CoA. Lys-2034 and Arg-2036 together coordinate CoA.

Homodimer. It depends on biotin as a cofactor. Mn(2+) is required as a cofactor.

The protein localises to the cytoplasm. It is found in the endoplasmic reticulum membrane. The catalysed reaction is hydrogencarbonate + acetyl-CoA + ATP = malonyl-CoA + ADP + phosphate + H(+). The enzyme catalyses N(6)-biotinyl-L-lysyl-[protein] + hydrogencarbonate + ATP = N(6)-carboxybiotinyl-L-lysyl-[protein] + ADP + phosphate + H(+). Its pathway is lipid metabolism; malonyl-CoA biosynthesis; malonyl-CoA from acetyl-CoA: step 1/1. Its activity is regulated as follows. By phosphorylation. The catalytic activity is inhibited by soraphen A, a polyketide isolated from the myxobacterium Sorangium cellulosum and a potent inhibitor of fungal growth. In terms of biological role, carries out three functions: biotin carboxyl carrier protein, biotin carboxylase and carboxyltransferase. Involved in the synthesis of very-long-chain fatty acid synthesis which is required to maintain a functional nuclear envelope. Required for acylation and vacuolar membrane association of VAC8 which is necessary to maintain a normal morphology of the vacuole. This is Acetyl-CoA carboxylase (ACC1) from Saccharomyces cerevisiae (strain ATCC 204508 / S288c) (Baker's yeast).